A 401-amino-acid chain; its full sequence is Protein IQ-DOMAIN 24 (401 aa).

Positions 1-48 (MGFFGRLFGSKKQEKATPNRRRWSFATRSSHPENDSSSHSSKRRGDED) are disordered. The calmodulin-binding stretch occupies residues 105–121 (EYKAAMKIQSAFRGYLA). 2 IQ domains span residues 105–133 (EYKAAMKIQSAFRGYLARRALRALKALVK) and 134–156 (LQALVKGHIVRKQTADMLRRMQT). 2 stretches are compositionally biased toward low complexity: residues 165–176 (RASRSSHVSDSS) and 278–287 (RSRTGSSSGG). Disordered regions lie at residues 165 to 186 (RASRSSHVSDSSHPPTLMIPSS) and 258 to 296 (SPRKRGSLVVPTSVENSPQLRSRTGSSSGGSRRKTPFTP).

The protein belongs to the IQD family. In terms of assembly, binds to multiple calmodulin (CaM) in the presence of Ca(2+) and CaM-like proteins.

The protein localises to the nucleus. Its subcellular location is the nuclear body. The protein resides in the cell membrane. Functionally, may be involved in cooperative interactions with calmodulins or calmodulin-like proteins. Recruits calmodulin proteins to microtubules, thus being a potential scaffold in cellular signaling and trafficking. May associate with nucleic acids and regulate gene expression at the transcriptional or post-transcriptional level. In Arabidopsis thaliana (Mouse-ear cress), this protein is Protein IQ-DOMAIN 24.